We begin with the raw amino-acid sequence, 398 residues long: cAMP-dependent protein kinase type 3 (398 aa).

A phosphoserine mark is found at Ser-15 and Ser-55. Residues Phe-88 to Phe-342 enclose the Protein kinase domain. Residues Leu-94 to Val-102 and Lys-117 each bind ATP. The active-site Proton acceptor is the Asp-211. The AGC-kinase C-terminal domain occupies Asn-343–Phe-398.

Belongs to the protein kinase superfamily. AGC Ser/Thr protein kinase family. cAMP subfamily.

The catalysed reaction is L-seryl-[protein] + ATP = O-phospho-L-seryl-[protein] + ADP + H(+). It catalyses the reaction L-threonyl-[protein] + ATP = O-phospho-L-threonyl-[protein] + ADP + H(+). With respect to regulation, activated by cAMP. This chain is cAMP-dependent protein kinase type 3 (TPK3), found in Saccharomyces cerevisiae (strain ATCC 204508 / S288c) (Baker's yeast).